We begin with the raw amino-acid sequence, 261 residues long: tRNA pseudouridine synthase A (261 aa).

D51 serves as the catalytic Nucleophile. Y109 is a binding site for substrate.

The protein belongs to the tRNA pseudouridine synthase TruA family. Homodimer.

It catalyses the reaction uridine(38/39/40) in tRNA = pseudouridine(38/39/40) in tRNA. Formation of pseudouridine at positions 38, 39 and 40 in the anticodon stem and loop of transfer RNAs. This is tRNA pseudouridine synthase A from Shewanella baltica (strain OS185).